Here is a 127-residue protein sequence, read N- to C-terminus: Prefoldin subunit 6 (127 aa).

A2 carries the post-translational modification N-acetylalanine. K21 bears the N6-acetyllysine mark. K66 is subject to N6-acetyllysine; alternate. Residue K66 forms a Glycyl lysine isopeptide (Lys-Gly) (interchain with G-Cter in SUMO1); alternate linkage. K66 is covalently cross-linked (Glycyl lysine isopeptide (Lys-Gly) (interchain with G-Cter in SUMO2); alternate).

This sequence belongs to the prefoldin subunit beta family. As to quaternary structure, heterohexamer of two PFD-alpha type and four PFD-beta type subunits. Component of the PAQosome complex which is responsible for the biogenesis of several protein complexes and which consists of R2TP complex members RUVBL1, RUVBL2, RPAP3 and PIH1D1, URI complex members PFDN2, PFDN6, PDRG1, UXT and URI1 as well as ASDURF, POLR2E and DNAAF10/WDR92.

In terms of biological role, binds specifically to cytosolic chaperonin (c-CPN) and transfers target proteins to it. Binds to nascent polypeptide chain and promotes folding in an environment in which there are many competing pathways for nonnative proteins. The chain is Prefoldin subunit 6 (Pfdn6) from Mus musculus (Mouse).